The sequence spans 274 residues: GCN5-related N-acetyltransferase 7, chloroplastic (274 aa).

The transit peptide at 1–65 (MAFLCSSLPS…STFVISESVS (65 aa)) directs the protein to the chloroplast. In terms of domain architecture, N-acetyltransferase spans 75-267 (LRVRTFNELN…QRLLLWLALP (193 aa)). Acetyl-CoA contacts are provided by residues 189-191 (VCV), 197-202 (RNGVGY), 228-230 (NEA), and tyrosine 235. Tyrosine 235 functions as the Proton donor in the catalytic mechanism.

This sequence belongs to the acetyltransferase family. GNAT subfamily. As to quaternary structure, oligomer. In terms of processing, autoacetylated. In terms of tissue distribution, expressed in green tissues.

Its subcellular location is the plastid. It is found in the chloroplast. The catalysed reaction is an N-terminal L-alpha-aminoacyl-[protein] + acetyl-CoA = N-terminal N(alpha)-acetyl-L-alpha-aminoacyl-[protein] + CoA + H(+). It carries out the reaction L-lysyl-[protein] + acetyl-CoA = N(6)-acetyl-L-lysyl-[protein] + CoA + H(+). It catalyses the reaction N-terminal L-alanyl-[protein] + acetyl-CoA = N-terminal N(alpha)-acetyl-L-alanyl-[protein] + CoA + H(+). The enzyme catalyses N-terminal L-seryl-[protein] + acetyl-CoA = N-terminal N(alpha)-acetyl-L-seryl-[protein] + CoA + H(+). The catalysed reaction is N-terminal L-threonyl-[protein] + acetyl-CoA = N-terminal N(alpha)-acetyl-L-threonyl-[protein] + CoA + H(+). It carries out the reaction N-terminal L-methionyl-[protein] + acetyl-CoA = N-terminal N(alpha)-acetyl-L-methionyl-[protein] + CoA + H(+). It catalyses the reaction N-terminal L-prolyl-[protein] + acetyl-CoA = N-terminal N(alpha)-acetyl-L-prolyl-[protein] + CoA + H(+). The enzyme catalyses N-terminal L-valyl-[protein] + acetyl-CoA = N-terminal N(alpha)-acetyl-L-valyl-[protein] + CoA + H(+). Protein acetyltransferase with dual specificity triggering both N-alpha-acetylation (NTA), with a large spectrum of modified N-termini, including methionine, alanine, serine, threonine and to a lower extent valine and proline as substrates, and epsilon-lysine acetylation (KA). The protein is GCN5-related N-acetyltransferase 7, chloroplastic of Arabidopsis thaliana (Mouse-ear cress).